A 236-amino-acid chain; its full sequence is Ubiquinone biosynthesis O-methyltransferase (236 aa).

The S-adenosyl-L-methionine site is built by R39, G59, D80, and M124.

It belongs to the methyltransferase superfamily. UbiG/COQ3 family.

The catalysed reaction is a 3-demethylubiquinol + S-adenosyl-L-methionine = a ubiquinol + S-adenosyl-L-homocysteine + H(+). The enzyme catalyses a 3-(all-trans-polyprenyl)benzene-1,2-diol + S-adenosyl-L-methionine = a 2-methoxy-6-(all-trans-polyprenyl)phenol + S-adenosyl-L-homocysteine + H(+). It functions in the pathway cofactor biosynthesis; ubiquinone biosynthesis. Functionally, O-methyltransferase that catalyzes the 2 O-methylation steps in the ubiquinone biosynthetic pathway. The protein is Ubiquinone biosynthesis O-methyltransferase of Shewanella sp. (strain ANA-3).